We begin with the raw amino-acid sequence, 280 residues long: F-box only protein 27 (280 aa).

Residues 1 to 26 (MGAWASRGRAARVPAPEPESEPEEAL) form a disordered region. An F-box domain is found at 25-72 (ALDLSQLPPELLLVVLSHVPPRTLLGRCRQVCRGWRALVDGQALWLLI). Residues 100–277 (PCPLGRFCAR…VTNSSVIVRV (178 aa)) enclose the FBA domain.

As to quaternary structure, part of a SCF (SKP1-cullin-F-box) protein ligase complex. Interacts with SKP1 and CUL1.

Functionally, substrate-recognition component of the SCF (SKP1-CUL1-F-box protein)-type E3 ubiquitin ligase complex. Able to recognize and bind complex-type oligosaccharides. The protein is F-box only protein 27 (FBXO27) of Macaca fascicularis (Crab-eating macaque).